The following is a 601-amino-acid chain: Glutamine--fructose-6-phosphate aminotransferase [isomerizing] (601 aa).

Cysteine 2 acts as the Nucleophile; for GATase activity in catalysis. A Glutamine amidotransferase type-2 domain is found at 2-218; that stretch reads CGIVGYIGYD…DHEIVIVKKD (217 aa). SIS domains are found at residues 284 to 423 and 453 to 591; these read IIND…EHGR and IATD…VDKP. Lysine 596 (for Fru-6P isomerization activity) is an active-site residue.

As to quaternary structure, homodimer.

It localises to the cytoplasm. The catalysed reaction is D-fructose 6-phosphate + L-glutamine = D-glucosamine 6-phosphate + L-glutamate. Catalyzes the first step in hexosamine metabolism, converting fructose-6P into glucosamine-6P using glutamine as a nitrogen source. This is Glutamine--fructose-6-phosphate aminotransferase [isomerizing] from Staphylococcus aureus (strain MRSA252).